The following is a 1905-amino-acid chain: Microtubule cross-linking factor 1 (1905 aa).

The tract at residues 1 to 249 (METLNGPAGG…SSDREPPRGA (249 aa)) is necessary for colocalization and binding with microtubules. Positions 1 to 329 (METLNGPAGG…SLGEQSRLVP (329 aa)) are disordered. A necessary for self-assembly, microtubule bundling activity and apicobasal microtubule organization region spans residues 1–508 (METLNGPAGG…QDDSADLRCQ (508 aa)). A compositionally biased stretch (basic residues) spans 22–40 (QHHRHHHLHPVAERRRLHR). Composition is skewed to low complexity over residues 63–95 (VPSS…AAPG) and 115–130 (AGAR…LGSR). Ser77 and Ser87 each carry phosphoserine. Phosphoserine occurs at positions 217, 221, and 263. Residues 268-283 (ALLAAPLAAGACPGGR) are compositionally biased toward low complexity. 3 coiled-coil regions span residues 330 to 404 (AAEE…EQKS), 432 to 483 (SVRL…SSLK), and 513 to 718 (KEEA…LQHE). Disordered stretches follow at residues 544–563 (YGDV…PSTR), 601–631 (DMRG…LESS), 671–694 (FEPP…GAPL), 737–800 (LRAP…SEPC), and 842–867 (AGLR…GDQQ). Ser549 carries the post-translational modification Phosphoserine. A compositionally biased stretch (basic and acidic residues) spans 601 to 616 (DMRGQQEREGPGRDHA). Position 618 is a phosphoserine (Ser618). At Thr621 the chain carries Phosphothreonine. Positions 680 to 692 (LGEGASPGAGGGA) are enriched in gly residues. Ser685 carries the post-translational modification Phosphoserine. Over residues 741 to 770 (SPRDSDAESDAGKKESDGEESRLPQPKREG) the composition is skewed to basic and acidic residues. Ser776 is modified (phosphoserine). Acidic residues predominate over residues 857–866 (GEEEQGEGDQ). A phosphoserine mark is found at Ser901, Ser923, Lys941, and Thr975. Residues 1080–1100 (GVQGGHQADGPDHDSDRGCGF) are disordered. Coiled coils occupy residues 1143-1201 (KALL…ELGS) and 1238-1278 (EKNW…KENS). The necessary for interaction with MARK2 and apicobasal microtubule bundle formation in polarized epithelial cells stretch occupies residues 1265–1382 (EFLWRIEQLQ…EENHKGNLQR (118 aa)). Ser1278 is modified (phosphoserine). Residues 1346–1384 (ALSLDDEPEEPPAHRPEREFRNRLPEEEENHKGNLQRAV) are disordered. A compositionally biased stretch (basic and acidic residues) spans 1356-1377 (PPAHRPEREFRNRLPEEEENHK). Residues Ser1385, Ser1388, and Ser1399 each carry the phosphoserine modification. The residue at position 1417 (Thr1417) is a Phosphothreonine. Ser1421 bears the Phosphoserine mark. Position 1427 is a phosphotyrosine (Tyr1427). The segment at 1485 to 1505 (DTMTSPEHCQKQPLRSHVLTE) is disordered. A phosphoserine mark is found at Ser1514, Ser1523, Ser1561, Ser1578, Ser1583, Ser1592, and Ser1661. Residues 1524–1569 (ITAAGGEGPFPTSRARGSPGDTKGGPPEPMLSRWPCTSPRHSRDYV) form a disordered region. 4 disordered regions span residues 1655 to 1689 (GSGV…SRQV), 1707 to 1756 (PKYG…PVHT), 1782 to 1842 (GLRA…APPG), and 1863 to 1905 (KEER…PWGL). Phosphothreonine occurs at positions 1667 and 1675. A compositionally biased stretch (low complexity) spans 1678-1687 (SSPSRSLRSR). The segment at 1678–1773 (SSPSRSLRSR…SLFNIIDHSP (96 aa)) is necessary for colocalization and binding with microtubules. Ser1679 and Ser1683 each carry phosphoserine. The span at 1744–1756 (ARSTTTRESPVHT) shows a compositional bias: polar residues. Ser1791, Ser1808, Ser1812, and Ser1814 each carry phosphoserine.

Belongs to the SOGA family. Homodimer. Associates (via N- and C-terminus domains) with microtubule filaments. As to quaternary structure, interacts with MARK2; the interaction is direct. Post-translationally, phosphorylated during mitosis in a CDK1-dependent manner.

The protein resides in the lateral cell membrane. It is found in the apical cell membrane. Its subcellular location is the cytoplasm. The protein localises to the cytoskeleton. It localises to the spindle pole. The protein resides in the midbody. Microtubule-associated factor involved in the late phase of epithelial polarization and microtubule dynamics regulation. Plays a role in the development and maintenance of non-centrosomal microtubule bundles at the lateral membrane in polarized epithelial cells. Required for faithful chromosome segregation during mitosis. The chain is Microtubule cross-linking factor 1 (MTCL1) from Homo sapiens (Human).